We begin with the raw amino-acid sequence, 37 residues long: Large ribosomal subunit protein bL36 (37 aa).

Belongs to the bacterial ribosomal protein bL36 family.

This is Large ribosomal subunit protein bL36 from Caldanaerobacter subterraneus subsp. tengcongensis (strain DSM 15242 / JCM 11007 / NBRC 100824 / MB4) (Thermoanaerobacter tengcongensis).